A 331-amino-acid polypeptide reads, in one-letter code: Putative T-box protein 36 (331 aa).

The T-box DNA-binding region spans 29 to 210 (EITKKQWNQL…MNRFSRKRKY (182 aa)).

The protein resides in the nucleus. The protein is Putative T-box protein 36 (tbx-36) of Caenorhabditis elegans.